The primary structure comprises 518 residues: Putative malate dehydrogenase 1B (518 aa).

It belongs to the LDH/MDH superfamily. MDH type 2 family.

The protein is Putative malate dehydrogenase 1B (MDH1B) of Homo sapiens (Human).